A 561-amino-acid polypeptide reads, in one-letter code: Bifunctional NAD(P)H-hydrate repair enzyme (561 aa).

Residues 1 to 241 (MLSRISERCT…WMIAAERMDA (241 aa)) are NAD(P)H-hydrate epimerase. A YjeF N-terminal domain is found at 29-235 (LRDAEPAAAA…SLGLEEWMIA (207 aa)). The segment at 77-81 (NNGGD) is NADPHX 1; for epimerase activity. Residues asparagine 78 and aspartate 145 each coordinate K(+). The tract at residues 149–155 (GTGISGP) is NADPHX 1; for epimerase activity. Positions 160 and 178 each coordinate (6S)-NADPHX. Residue serine 181 coordinates K(+). The YjeF C-terminal domain maps to 249–548 (LGDVYGYFST…PRIPFIVNAS (300 aa)). The segment at 249–561 (LGDVYGYFST…SATQQRPSGL (313 aa)) is ADP-dependent (S)-NAD(P)H-hydrate dehydratase. (6S)-NADPHX is bound at residue glycine 351. The NADPHX 2; for dehydratase activity stretch occupies residues 417–423 (HPGEAAR). Residues 454-458 (KGPGT) and 475-484 (NAGMASGGMG) each bind ADP. Aspartate 485 provides a ligand contact to (6S)-NADPHX.

The protein in the N-terminal section; belongs to the NnrE/AIBP family. It in the C-terminal section; belongs to the NnrD/CARKD family. Requires K(+) as cofactor.

The enzyme catalyses (6S)-NADHX + ADP = AMP + phosphate + NADH + H(+). It catalyses the reaction (6S)-NADPHX + ADP = AMP + phosphate + NADPH + H(+). It carries out the reaction (6R)-NADHX = (6S)-NADHX. The catalysed reaction is (6R)-NADPHX = (6S)-NADPHX. Bifunctional enzyme that catalyzes the epimerization of the S- and R-forms of NAD(P)HX and the dehydration of the S-form of NAD(P)HX at the expense of ADP, which is converted to AMP. This allows the repair of both epimers of NAD(P)HX, a damaged form of NAD(P)H that is a result of enzymatic or heat-dependent hydration. This is Bifunctional NAD(P)H-hydrate repair enzyme from Leishmania braziliensis.